Consider the following 1056-residue polypeptide: Carbamoyl phosphate synthase large chain (1056 aa).

Residues 1–397 are carboxyphosphate synthetic domain; that stretch reads MPKKSHIKKV…AFKKALRSLD (397 aa). Residues arginine 127, arginine 167, glycine 173, glycine 174, glutamate 206, valine 208, glutamate 213, glycine 239, isoleucine 240, histidine 241, glutamine 282, and glutamate 294 each contribute to the ATP site. The region spanning 131–323 is the ATP-grasp 1 domain; it reads RDLMNAIGEP…IARVAAKIAI (193 aa). Positions 282, 294, and 296 each coordinate Mg(2+). Mn(2+)-binding residues include glutamine 282, glutamate 294, and asparagine 296. Residues 398–530 form an oligomerization domain region; sequence NDMQQHTNPS…YSTWEEGCEL (133 aa). The tract at residues 531-920 is carbamoyl phosphate synthetic domain; sequence VRDSAKKVLI…YKACTAADNT (390 aa). The ATP-grasp 2 domain occupies 662–853; it reads SRLLTRLEIP…LAKIAAKVMV (192 aa). The ATP site is built by arginine 698, serine 737, leucine 739, glutamate 744, glycine 769, valine 770, histidine 771, serine 772, glutamine 812, and glutamate 824. Residues glutamine 812, glutamate 824, and asparagine 826 each contribute to the Mg(2+) site. 3 residues coordinate Mn(2+): glutamine 812, glutamate 824, and asparagine 826. Positions 919–1056 constitute an MGS-like domain; sequence NTLPTTGNVF…EPLGHYHGLM (138 aa). The allosteric domain stretch occupies residues 921 to 1056; it reads LPTTGNVFIS…EPLGHYHGLM (136 aa).

It belongs to the CarB family. As to quaternary structure, composed of two chains; the small (or glutamine) chain promotes the hydrolysis of glutamine to ammonia, which is used by the large (or ammonia) chain to synthesize carbamoyl phosphate. Tetramer of heterodimers (alpha,beta)4. It depends on Mg(2+) as a cofactor. The cofactor is Mn(2+).

The enzyme catalyses hydrogencarbonate + L-glutamine + 2 ATP + H2O = carbamoyl phosphate + L-glutamate + 2 ADP + phosphate + 2 H(+). It catalyses the reaction hydrogencarbonate + NH4(+) + 2 ATP = carbamoyl phosphate + 2 ADP + phosphate + 2 H(+). Its pathway is amino-acid biosynthesis; L-arginine biosynthesis; carbamoyl phosphate from bicarbonate: step 1/1. The protein operates within pyrimidine metabolism; UMP biosynthesis via de novo pathway; (S)-dihydroorotate from bicarbonate: step 1/3. In terms of biological role, large subunit of the glutamine-dependent carbamoyl phosphate synthetase (CPSase). CPSase catalyzes the formation of carbamoyl phosphate from the ammonia moiety of glutamine, carbonate, and phosphate donated by ATP, constituting the first step of 2 biosynthetic pathways, one leading to arginine and/or urea and the other to pyrimidine nucleotides. The large subunit (synthetase) binds the substrates ammonia (free or transferred from glutamine from the small subunit), hydrogencarbonate and ATP and carries out an ATP-coupled ligase reaction, activating hydrogencarbonate by forming carboxy phosphate which reacts with ammonia to form carbamoyl phosphate. This Methanoculleus marisnigri (strain ATCC 35101 / DSM 1498 / JR1) protein is Carbamoyl phosphate synthase large chain.